Here is a 107-residue protein sequence, read N- to C-terminus: Integration host factor subunit alpha (107 aa).

This sequence belongs to the bacterial histone-like protein family. As to quaternary structure, heterodimer of an alpha and a beta chain.

Functionally, this protein is one of the two subunits of integration host factor, a specific DNA-binding protein that functions in genetic recombination as well as in transcriptional and translational control. The polypeptide is Integration host factor subunit alpha (Brucella anthropi (strain ATCC 49188 / DSM 6882 / CCUG 24695 / JCM 21032 / LMG 3331 / NBRC 15819 / NCTC 12168 / Alc 37) (Ochrobactrum anthropi)).